A 283-amino-acid polypeptide reads, in one-letter code: Phosphatidylglycerol--prolipoprotein diacylglyceryl transferase (283 aa).

A run of 7 helical transmembrane segments spans residues L18–F38, Y62–Y82, F106–Y126, L136–I156, P190–A210, G218–Y238, and L252–Y272. Position 155 (R155) interacts with a 1,2-diacyl-sn-glycero-3-phospho-(1'-sn-glycerol).

Belongs to the Lgt family.

The protein localises to the cell inner membrane. The catalysed reaction is L-cysteinyl-[prolipoprotein] + a 1,2-diacyl-sn-glycero-3-phospho-(1'-sn-glycerol) = an S-1,2-diacyl-sn-glyceryl-L-cysteinyl-[prolipoprotein] + sn-glycerol 1-phosphate + H(+). It functions in the pathway protein modification; lipoprotein biosynthesis (diacylglyceryl transfer). In terms of biological role, catalyzes the transfer of the diacylglyceryl group from phosphatidylglycerol to the sulfhydryl group of the N-terminal cysteine of a prolipoprotein, the first step in the formation of mature lipoproteins. This chain is Phosphatidylglycerol--prolipoprotein diacylglyceryl transferase, found in Helicobacter pylori (strain J99 / ATCC 700824) (Campylobacter pylori J99).